Here is a 439-residue protein sequence, read N- to C-terminus: Glutamate--tRNA ligase 2 (439 aa).

Residues 6 to 16 (PSPTGDMHIGN) carry the 'HIGH' region motif. Residues 232–236 (KMSKR) carry the 'KMSKS' region motif. K235 is a binding site for ATP.

The protein belongs to the class-I aminoacyl-tRNA synthetase family. Glutamate--tRNA ligase type 1 subfamily. As to quaternary structure, monomer.

It is found in the cytoplasm. The enzyme catalyses tRNA(Glu) + L-glutamate + ATP = L-glutamyl-tRNA(Glu) + AMP + diphosphate. Its function is as follows. Catalyzes the attachment of glutamate to tRNA(Glu) in a two-step reaction: glutamate is first activated by ATP to form Glu-AMP and then transferred to the acceptor end of tRNA(Glu). This chain is Glutamate--tRNA ligase 2, found in Helicobacter pylori (strain Shi470).